Here is a 335-residue protein sequence, read N- to C-terminus: 2-acylglycerol O-acyltransferase 1 (335 aa).

The next 2 membrane-spanning stretches (helical) occupy residues 24 to 44 (WVLSFLLLVQVCIGIMVMLVL) and 104 to 124 (YIFGFHPHGIFVPGAFGNFCT). N180 is a glycosylation site (N-linked (GlcNAc...) asparagine).

The protein belongs to the diacylglycerol acyltransferase family. Expressed at high level in kidney and stomach. Expressed at lower level in brown and white adipose tissue, uterus and liver. Not detected in small intestine.

The protein localises to the endoplasmic reticulum membrane. The catalysed reaction is a 2-acylglycerol + an acyl-CoA = a 1,2-diacylglycerol + CoA. It carries out the reaction 2-(9Z-octadecenoyl)-glycerol + butanoyl-CoA = 1-butanoyl-2-(9Z-octadecenoyl)-glycerol + CoA. The enzyme catalyses 2-(9Z-octadecenoyl)-glycerol + octanoyl-CoA = 1-octanoyl-2-(9Z-octadecenoyl)-glycerol + CoA. It catalyses the reaction 2-(9Z-octadecenoyl)-glycerol + dodecanoyl-CoA = 1-dodecanoyl-2-(9Z-octadecenoyl)-glycerol + CoA. The catalysed reaction is 2-(9Z-octadecenoyl)-glycerol + tetradecanoyl-CoA = 1-tetradecanoyl-2-(9Z-octadecenoyl)-glycerol + CoA. It carries out the reaction 2-(9Z-octadecenoyl)-glycerol + hexadecanoyl-CoA = 1-hexadecanoyl-2-(9Z-octadecenoyl)-glycerol + CoA. The enzyme catalyses 2-(9Z-octadecenoyl)-glycerol + octadecanoyl-CoA = 1-octadecanoyl-2-(9Z-octadecenoyl)-glycerol + CoA. It catalyses the reaction eicosanoyl-CoA + 2-(9Z-octadecenoyl)-glycerol = 1-eicosanoyl-2-(9Z-octadecenoyl)-glycerol + CoA. The catalysed reaction is 2-(9Z-octadecenoyl)-glycerol + (9Z)-octadecenoyl-CoA = 1,2-di-(9Z-octadecenoyl)-glycerol + CoA. It carries out the reaction 2-(9Z-octadecenoyl)-glycerol + (9Z,12Z)-octadecadienoyl-CoA = 1-(9Z,12Z-octadecadienoyl)-2-(9Z-octadecenoyl)-glycerol + CoA. The enzyme catalyses 2-(9Z-octadecenoyl)-glycerol + (5Z,8Z,11Z,14Z)-eicosatetraenoyl-CoA = 1-(5Z,8Z,11Z,14Z-eicosatetraenoyl)-2-(9Z-octadecenoyl)-glycerol + CoA. It catalyses the reaction a 2-acylglycerol + an acyl-CoA = a 1,2-diacyl-sn-glycerol + CoA. The catalysed reaction is a 2-acylglycerol + an acyl-CoA = a 2,3-diacyl-sn-glycerol + CoA. It carries out the reaction a 1-acylglycerol + an acyl-CoA = a 1,2-diacylglycerol + CoA. The enzyme catalyses 1-dodecanoylglycerol + (9Z)-octadecenoyl-CoA = 1-dodecanoyl-2-(9Z-octadecenoyl)-glycerol + CoA. It catalyses the reaction 1-tetradecanoylglycerol + (9Z)-octadecenoyl-CoA = 1-tetradecanoyl-2-(9Z-octadecenoyl)-glycerol + CoA. The catalysed reaction is 1-hexadecanoylglycerol + (9Z)-octadecenoyl-CoA = 1-hexadecanoyl-2-(9Z-octadecenoyl)-glycerol + CoA. It carries out the reaction 1-(9Z-octadecenoyl)-glycerol + (9Z)-octadecenoyl-CoA = 1,2-di-(9Z-octadecenoyl)-glycerol + CoA. The enzyme catalyses 1-(9Z,12Z-octadecadienoyl)-glycerol + (9Z)-octadecenoyl-CoA = 1-(9Z,12Z-octadecadienoyl)-2-(9Z-octadecenoyl)-glycerol + CoA. It catalyses the reaction 1-(9Z,12Z,15Z-octadecatrienoyl)-glycerol + (9Z)-octadecenoyl-CoA = 1-(9Z,12Z,15Z-octadecatrienoyl)-2-(9Z-octadecenoyl)-glycerol + CoA. The catalysed reaction is 1-(5Z,8Z,11Z,14Z-eicosatetraenoyl)-glycerol + (9Z)-octadecenoyl-CoA = 1-(5Z,8Z,11Z,14Z-eicosatetraenoyl)-2-(9Z-octadecenoyl)-glycerol + CoA. It carries out the reaction a 1-acylglycerol + an acyl-CoA = a 1,3-diacylglycerol + CoA. The enzyme catalyses 1-dodecanoylglycerol + (9Z)-octadecenoyl-CoA = 1-dodecanoyl-3-(9Z-octadecenoyl)-glycerol + CoA. It catalyses the reaction 1-hexadecanoylglycerol + (9Z)-octadecenoyl-CoA = 1-(9Z-octadecenoyl)-3-hexadecanoylglycerol + CoA. The catalysed reaction is 1-octadecanoylglycerol + (9Z)-octadecenoyl-CoA = 1-octadecanoyl-3-(9Z-octadecenoyl)-glycerol + CoA. It carries out the reaction 1-(9Z-octadecenoyl)-sn-glycerol + (9Z)-octadecenoyl-CoA = 1,3-di-(9Z-octadecenoyl)-glycerol + CoA. The enzyme catalyses 1-(9Z,12Z-octadecadienoyl)-glycerol + (9Z)-octadecenoyl-CoA = 1-(9Z-octadecenoyl)-3-(9Z,12Z-octadecadienoyl)-glycerol + CoA. It catalyses the reaction 1-(9Z,12Z,15Z-octadecatrienoyl)-glycerol + (9Z)-octadecenoyl-CoA = 1-(9Z,12Z,15Z-octadecatrienoyl)-3-(9Z-octadecenoyl)-glycerol + CoA. The catalysed reaction is a 1-acyl-sn-glycerol + an acyl-CoA = a 1,3-diacyl-sn-glycerol + CoA. It carries out the reaction a 3-acyl-sn-glycerol + an acyl-CoA = a 1,3-diacyl-sn-glycerol + CoA. The enzyme catalyses 3-octadecanoyl-sn-glycerol + (9Z)-octadecenoyl-CoA = 1-(9Z-octadecenoyl)-3-octadecanoyl-sn-glycerol + CoA. Its pathway is glycerolipid metabolism; triacylglycerol biosynthesis. In terms of biological role, involved in glycerolipid synthesis and lipid metabolism. Catalyzes the formation of diacylglycerol, the precursor of triacylglycerol, by transferring the acyl chain of a fatty acyl-CoA to a monoacylglycerol, mainly at the sn-1 or sn-3 positions. It uses both sn-2-monoacylglycerol (2-acylglycerol) and sn-1-monoacylglycerol (1-acyl-sn-glycerol) equally well as substrates, and uses sn-3-monoacylglycerol (3-acyl-sn-glycerol) with lower efficiency. Probably not involved in absorption of dietary fat in the small intestine. This is 2-acylglycerol O-acyltransferase 1 from Mus musculus (Mouse).